A 382-amino-acid polypeptide reads, in one-letter code: Protein RecA (382 aa).

Positions 1-20 (MPADVKAAQSSAGDSRPGER) are disordered. 79–86 (GPESSGKT) is a binding site for ATP. Over residues 360 to 369 (SAAAKPSAKT) the composition is skewed to low complexity. The interval 360-382 (SAAAKPSAKTADTDKKLVADGAA) is disordered. Over residues 370–382 (ADTDKKLVADGAA) the composition is skewed to basic and acidic residues.

The protein belongs to the RecA family.

The protein localises to the cytoplasm. Can catalyze the hydrolysis of ATP in the presence of single-stranded DNA, the ATP-dependent uptake of single-stranded DNA by duplex DNA, and the ATP-dependent hybridization of homologous single-stranded DNAs. It interacts with LexA causing its activation and leading to its autocatalytic cleavage. In Synechococcus sp. (strain CC9311), this protein is Protein RecA.